A 149-amino-acid chain; its full sequence is Transcriptional repressor NrdR (149 aa).

A zinc finger lies at 3–34; the sequence is CPFCSATDTKVIDSRLVSDGHQVRRRRQCLAC. The ATP-cone domain occupies 49–139; that stretch reads PKVIKSNGNR…VYRSFEDIKE (91 aa).

It belongs to the NrdR family. The cofactor is Zn(2+).

Functionally, negatively regulates transcription of bacterial ribonucleotide reductase nrd genes and operons by binding to NrdR-boxes. This Aliivibrio salmonicida (strain LFI1238) (Vibrio salmonicida (strain LFI1238)) protein is Transcriptional repressor NrdR.